We begin with the raw amino-acid sequence, 361 residues long: Caspase activity and apoptosis inhibitor 1 (361 aa).

Basic residues predominate over residues 1–14 (MTGKKSSREKRRKR). Disordered regions lie at residues 1–28 (MTGK…APDI) and 67–100 (GGSG…GSLQ). Low complexity predominate over residues 19–28 (AAAALAAPDI). Serine 89 carries the post-translational modification Phosphoserine. At threonine 90 the chain carries Phosphothreonine. Lysine 104 participates in a covalent cross-link: Glycyl lysine isopeptide (Lys-Gly) (interchain with G-Cter in SUMO2). Serine 120 and serine 203 each carry phosphoserine. Disordered stretches follow at residues 198–218 (DNGM…MGSD) and 230–331 (ASSV…DVQP). Residues 199–210 (NGMDSDMEEEAD) are compositionally biased toward acidic residues. Basic and acidic residues predominate over residues 234–251 (RENKQPEGLELKQGKGED). A compositionally biased stretch (low complexity) spans 272–281 (EEAAAPEAPE). The stretch at 281–311 (ENTVQSEAGQIDDLEKDIEKSVNEILGLAES) forms a coiled coil. Serine 312 is subject to Phosphoserine.

As to expression, ubiquitous.

Its function is as follows. Anti-apoptotic protein that modulates a caspase-10 dependent mitochondrial caspase-3/9 feedback amplification loop. This chain is Caspase activity and apoptosis inhibitor 1 (CAAP1), found in Homo sapiens (Human).